Consider the following 511-residue polypeptide: Putative polyol transporter 1 (511 aa).

The next 12 membrane-spanning stretches (helical) occupy residues 27-47 (FACA…IGVM), 63-83 (VQLE…SGAA), 94-114 (YTIV…GFAT), 124-144 (FVAG…TAEV), 151-171 (GFLT…GYVS), 186-206 (FMLG…LAMP), 284-304 (ILIA…DAVV), 324-344 (LATV…TCVV), 351-371 (ALLL…GTSL), 384-404 (WAIG…SIGA), 424-444 (GASL…MTFL), and 454-474 (GAFL…FTFL).

This sequence belongs to the major facilitator superfamily. Sugar transporter (TC 2.A.1.1) family.

The protein localises to the membrane. In terms of biological role, plasma membrane sugar-proton symporter. This Arabidopsis thaliana (Mouse-ear cress) protein is Putative polyol transporter 1 (PLT1).